The sequence spans 159 residues: Putative pre-16S rRNA nuclease (159 aa).

The protein belongs to the YqgF nuclease family.

It localises to the cytoplasm. Functionally, could be a nuclease involved in processing of the 5'-end of pre-16S rRNA. This chain is Putative pre-16S rRNA nuclease, found in Agrobacterium fabrum (strain C58 / ATCC 33970) (Agrobacterium tumefaciens (strain C58)).